We begin with the raw amino-acid sequence, 430 residues long: MSTIRSIHAREILDSRGNPTLEAEVILEDGSFGRAAVPSGASTGTKEAVELRDGDKTRYLGKGVRKAVDNVNTTIAAALKGFEATDQAGLDRRLIDLDGTENKGRLGANALLGVSMAAAHAAAASNKQALWQYLAARTGVTPSLPVPMMNIINGGAHADNNVDFQEFMVLPVGFTSFSEALRAGTEIFHSLKSVLKGHGLSTAVGDEGGFAPDFRSNVEALDTILEAIGKAGYTAGEDVLLGLDVASSEFFENGKYNLVGENKRLTSEQFVDFLADWAAQYPIITIEDGLAENDWAGWKLLTDRIGKKVQLVGDDLFVTNPKIFQEGIDSGTANAILIKVNQIGTLSETLEAIAMADRAGYAAVVSHRSGETEDTTIADIAVATTATQIKTGSLCRSDRVAKYNQLLRIEEALGAGARYAGRDAFVSLKR.

(2R)-2-phosphoglycerate is bound at residue Gln165. The active-site Proton donor is Glu207. Mg(2+)-binding residues include Asp244, Glu287, and Asp314. Positions 339, 368, 369, and 390 each coordinate (2R)-2-phosphoglycerate. The active-site Proton acceptor is Lys339.

It belongs to the enolase family. As to quaternary structure, component of the RNA degradosome, a multiprotein complex involved in RNA processing and mRNA degradation. It depends on Mg(2+) as a cofactor.

Its subcellular location is the cytoplasm. The protein resides in the secreted. It localises to the cell surface. The enzyme catalyses (2R)-2-phosphoglycerate = phosphoenolpyruvate + H2O. Its pathway is carbohydrate degradation; glycolysis; pyruvate from D-glyceraldehyde 3-phosphate: step 4/5. Catalyzes the reversible conversion of 2-phosphoglycerate (2-PG) into phosphoenolpyruvate (PEP). It is essential for the degradation of carbohydrates via glycolysis. In Stenotrophomonas maltophilia (strain K279a), this protein is Enolase.